The chain runs to 230 residues: NAD-dependent protein deacylase 1 (230 aa).

Positions 1–226 (MESGIPTYRE…SHLSAFLSRE (226 aa)) constitute a Deacetylase sirtuin-type domain. Substrate is bound by residues tyrosine 41 and arginine 44. Residue 75–78 (QNID) coordinates NAD(+). The Proton acceptor role is filled by histidine 93. 4 residues coordinate Zn(2+): cysteine 101, cysteine 104, cysteine 128, and cysteine 131. NAD(+)-binding positions include 168–170 (GTS), 194–196 (NTV), and alanine 212.

This sequence belongs to the sirtuin family. Class III subfamily. Zn(2+) is required as a cofactor.

The protein localises to the cytoplasm. It catalyses the reaction N(6)-acetyl-L-lysyl-[protein] + NAD(+) + H2O = 2''-O-acetyl-ADP-D-ribose + nicotinamide + L-lysyl-[protein]. The catalysed reaction is N(6)-succinyl-L-lysyl-[protein] + NAD(+) + H2O = 2''-O-succinyl-ADP-D-ribose + nicotinamide + L-lysyl-[protein]. Its function is as follows. NAD-dependent lysine deacetylase and desuccinylase that specifically removes acetyl and succinyl groups on target proteins. Modulates the activities of several proteins which are inactive in their acylated form. This Pseudomonas syringae pv. tomato (strain ATCC BAA-871 / DC3000) protein is NAD-dependent protein deacylase 1.